A 418-amino-acid chain; its full sequence is Gamma-glutamyl phosphate reductase (418 aa).

The protein belongs to the gamma-glutamyl phosphate reductase family.

It is found in the cytoplasm. The enzyme catalyses L-glutamate 5-semialdehyde + phosphate + NADP(+) = L-glutamyl 5-phosphate + NADPH + H(+). The protein operates within amino-acid biosynthesis; L-proline biosynthesis; L-glutamate 5-semialdehyde from L-glutamate: step 2/2. Catalyzes the NADPH-dependent reduction of L-glutamate 5-phosphate into L-glutamate 5-semialdehyde and phosphate. The product spontaneously undergoes cyclization to form 1-pyrroline-5-carboxylate. The chain is Gamma-glutamyl phosphate reductase from Geobacter sulfurreducens (strain ATCC 51573 / DSM 12127 / PCA).